A 294-amino-acid polypeptide reads, in one-letter code: Polyketide transferase grgF (294 aa).

Catalysis depends on residues cysteine 115, aspartate 240, and histidine 269.

It belongs to the polyketide transferase af380 family. Homodimer.

It functions in the pathway secondary metabolite biosynthesis. Polyketide transferase; part of the gene cluster that mediates the biosynthesis of gregatin A, a fungal polyketide featuring an alkylated furanone core. The PKS grgA synthesizes C11 and C4 polyketide chains in the presence and absence of the trans-enoyl reductase grgB, respectively. The polyketide transferase grgF is then responsible for the fusion of the two carbon chains to produce the furanone skeleton of gregatin A. GrgF first undergoes a conformational change to an open form, and the active site Cys-115 is acylated by the C11 chain. After the elimination of the phosphopantetheinyl chain, the second polyketide chain of four carbons long is delivered adjacent to the enzyme-bound C11 chain. The catalytic histidine, His-269, deprotonates a proton from C-2 of the long chain, and the resultant carbanion attacks the C-1 carbonyl of the crotonyl group to perform Claisen condensation, by which the phosphopantetheinyl chain is released. Eventually, hydrolysis of the thioester linkage probably by a His-269-activated water molecule completes the reaction to afford the grgF final product. Next, the cytochrome P450 monooxygenase grgG accepts the unstable grgF final product as substrate and performs the oxidative cyclization to furnish the gregatin scaffold and leads to the formation of desmethylgregatin A. Finally, the O-methyltransferase grgD methylates the carboxyl group of desmethylgregatin A to provide gregatin A. In Penicillium sp, this protein is Polyketide transferase grgF.